The primary structure comprises 562 residues: Endoglucanase E1 (562 aa).

The signal sequence occupies residues 1-41 (MPRALRRVPGSRVMLRVGVVVAVLALVAALANLAVPRPARA). The segment at 42–400 (AGGGYWHTSG…IKSSIFDPVG (359 aa)) is catalytic. Residues Cys-75 and Cys-161 are joined by a disulfide bond. Catalysis depends on Glu-203, which acts as the Proton donor. Cys-209 and Cys-212 are joined by a disulfide. Catalysis depends on Glu-323, which acts as the Nucleophile. Positions 399 to 462 (VGASASPSSQ…PTPSPTAASG (64 aa)) are disordered. Composition is skewed to low complexity over residues 401 to 411 (ASASPSSQPSP) and 437 to 449 (PTPT…TPTP). A CBM2 domain is found at 458-562 (TAASGARCTA…AAPTVACAAS (105 aa)).

This sequence belongs to the glycosyl hydrolase 5 (cellulase A) family.

It catalyses the reaction Endohydrolysis of (1-&gt;4)-beta-D-glucosidic linkages in cellulose, lichenin and cereal beta-D-glucans.. Has a very high specific activity on carboxymethylcellulose. This is Endoglucanase E1 from Acidothermus cellulolyticus (strain ATCC 43068 / DSM 8971 / 11B).